The sequence spans 529 residues: uncharacterized protein (529 aa).

The zn(2)-C6 fungal-type DNA-binding region spans 26-58 (CDSCRKQKTRCLAGSVEDENRACLRCRSLNMDC).

Its subcellular location is the nucleus. This is an uncharacterized protein from Schizosaccharomyces pombe (strain 972 / ATCC 24843) (Fission yeast).